The chain runs to 58 residues: Microcin J25 (58 aa).

A propeptide spanning residues 1-37 (MIKHFHFNKLSSGKKNNVPSPAKGVIQIKKSASQLTK) is cleaved from the precursor. A cross-link (isoglutamyl glycine isopeptide (Gly-Glu)) is located at residues 38–45 (GGAGHVPE).

The protein resides in the secreted. In terms of biological role, peptide antibiotic that functions through inhibition of the bacterial DNA-dependent RNA polymerase (RNAP). Inhibits transcription by binding deep within RNAP secondary channel, where it sterically blocks the folding of the trigger loop, which is essential for efficient catalysis. In addition, it also seems to restrict access of nucleotide substrates to the catalytic center, and shows a partially competitive mode of inhibition with them. Exhibits potent bacteriocidal activity against a range of Enterobacteriaceae, including several pathogenic E.coli, Salmonella and Shigella strains. Also acts on the cytoplasmic membrane of Salmonella newport, producing alteration of membrane permeability and disruption of the subsequent gradient dissipation, which inhibits several processes essential for cell viability, such as oxygen consumption. Induces bacterial filamentation in susceptible cells in a non-SOS-dependent way, but this phenotype may result from impaired transcription of genes coding for cell division proteins. The chain is Microcin J25 (mcjA) from Escherichia coli.